The primary structure comprises 424 residues: CinA-like protein (424 aa).

It belongs to the CinA family.

In Shewanella sediminis (strain HAW-EB3), this protein is CinA-like protein.